Reading from the N-terminus, the 442-residue chain is tRNA-2-methylthio-N(6)-dimethylallyladenosine synthase (442 aa).

The MTTase N-terminal domain occupies 3 to 120 (KKLYIETHGC…LPEMIDAARV (118 aa)). [4Fe-4S] cluster contacts are provided by cysteine 12, cysteine 49, cysteine 83, cysteine 157, cysteine 161, and cysteine 164. The Radical SAM core domain occupies 143–375 (RVDGPSAYVS…QHRLNQQGFE (233 aa)). The TRAM domain occupies 378-442 (RQMVGSIQRI…PHSLRGSLLQ (65 aa)).

It belongs to the methylthiotransferase family. MiaB subfamily. As to quaternary structure, monomer. [4Fe-4S] cluster is required as a cofactor.

It is found in the cytoplasm. The catalysed reaction is N(6)-dimethylallyladenosine(37) in tRNA + (sulfur carrier)-SH + AH2 + 2 S-adenosyl-L-methionine = 2-methylsulfanyl-N(6)-dimethylallyladenosine(37) in tRNA + (sulfur carrier)-H + 5'-deoxyadenosine + L-methionine + A + S-adenosyl-L-homocysteine + 2 H(+). Functionally, catalyzes the methylthiolation of N6-(dimethylallyl)adenosine (i(6)A), leading to the formation of 2-methylthio-N6-(dimethylallyl)adenosine (ms(2)i(6)A) at position 37 in tRNAs that read codons beginning with uridine. The sequence is that of tRNA-2-methylthio-N(6)-dimethylallyladenosine synthase from Pseudomonas syringae pv. syringae (strain B728a).